The primary structure comprises 188 residues: Probable manganese efflux pump MntP (188 aa).

5 helical membrane passes run 3–23 (ITATVLLAFGMSMDAFAASVG), 66–86 (LEWNHWIAFVLLIFLGGRMII), 106–128 (WLLVTTAIATSLDAMAVGVGLAF), 143–163 (ATLIMSTLGMMVGRFIGSIIG), and 168–188 (ILGGLVLIGIGVQILWTHFHG).

It belongs to the MntP (TC 9.B.29) family.

The protein resides in the cell inner membrane. Probably functions as a manganese efflux pump. This is Probable manganese efflux pump MntP from Shigella sonnei (strain Ss046).